Consider the following 523-residue polypeptide: Cyclin-dependent kinase 17 (523 aa).

Serine 9 is modified (phosphoserine). The tract at residues threonine 30–histidine 55 is disordered. A phosphoserine mark is found at serine 80, serine 92, and serine 105. Residues methionine 103–proline 123 are disordered. Residues aspartate 110–proline 123 are compositionally biased toward polar residues. Phosphoserine occurs at positions 137, 146, 165, and 180. The Protein kinase domain occupies tyrosine 192–phenylalanine 473. Residues leucine 198–valine 206 and lysine 221 each bind ATP. Aspartate 313 (proton acceptor) is an active-site residue. Residues proline 501–phenylalanine 523 form a disordered region. Residues glycine 514–phenylalanine 523 are compositionally biased toward basic residues.

The protein belongs to the protein kinase superfamily. CMGC Ser/Thr protein kinase family. CDC2/CDKX subfamily. Found in a complex containing CABLES1, CDK16 and TDRD7. Interacts with TDRD7.

It catalyses the reaction L-seryl-[protein] + ATP = O-phospho-L-seryl-[protein] + ADP + H(+). The enzyme catalyses L-threonyl-[protein] + ATP = O-phospho-L-threonyl-[protein] + ADP + H(+). Functionally, may play a role in terminally differentiated neurons. Has a Ser/Thr-phosphorylating activity for histone H1. In Homo sapiens (Human), this protein is Cyclin-dependent kinase 17 (CDK17).